A 178-amino-acid chain; its full sequence is ATP-dependent protease subunit HslV (178 aa).

The active site involves T7. 3 residues coordinate Na(+): G162, C165, and T168.

The protein belongs to the peptidase T1B family. HslV subfamily. In terms of assembly, a double ring-shaped homohexamer of HslV is capped on each side by a ring-shaped HslU homohexamer. The assembly of the HslU/HslV complex is dependent on binding of ATP.

It is found in the cytoplasm. The catalysed reaction is ATP-dependent cleavage of peptide bonds with broad specificity.. Its activity is regulated as follows. Allosterically activated by HslU binding. Functionally, protease subunit of a proteasome-like degradation complex believed to be a general protein degrading machinery. The chain is ATP-dependent protease subunit HslV from Azoarcus sp. (strain BH72).